The chain runs to 372 residues: Anhydro-N-acetylmuramic acid kinase (372 aa).

ATP is bound at residue 13–20; the sequence is GTSMDGID.

Belongs to the anhydro-N-acetylmuramic acid kinase family.

The enzyme catalyses 1,6-anhydro-N-acetyl-beta-muramate + ATP + H2O = N-acetyl-D-muramate 6-phosphate + ADP + H(+). The protein operates within amino-sugar metabolism; 1,6-anhydro-N-acetylmuramate degradation. It functions in the pathway cell wall biogenesis; peptidoglycan recycling. Functionally, catalyzes the specific phosphorylation of 1,6-anhydro-N-acetylmuramic acid (anhMurNAc) with the simultaneous cleavage of the 1,6-anhydro ring, generating MurNAc-6-P. Is required for the utilization of anhMurNAc either imported from the medium or derived from its own cell wall murein, and thus plays a role in cell wall recycling. The protein is Anhydro-N-acetylmuramic acid kinase of Rhizobium johnstonii (strain DSM 114642 / LMG 32736 / 3841) (Rhizobium leguminosarum bv. viciae).